The chain runs to 296 residues: Formamidopyrimidine-DNA glycosylase (296 aa).

P2 acts as the Schiff-base intermediate with DNA in catalysis. The Proton donor role is filled by E3. K58 functions as the Proton donor; for beta-elimination activity in the catalytic mechanism. Residues H106, R125, and K168 each contribute to the DNA site. The FPG-type zinc-finger motif lies at 259–295; that stretch reads RVYDRVGHACPTKGCTGRIGRIVQGGRSTFFCETCQV. Catalysis depends on R285, which acts as the Proton donor; for delta-elimination activity.

This sequence belongs to the FPG family. As to quaternary structure, monomer. Zn(2+) serves as cofactor.

It carries out the reaction Hydrolysis of DNA containing ring-opened 7-methylguanine residues, releasing 2,6-diamino-4-hydroxy-5-(N-methyl)formamidopyrimidine.. The catalysed reaction is 2'-deoxyribonucleotide-(2'-deoxyribose 5'-phosphate)-2'-deoxyribonucleotide-DNA = a 3'-end 2'-deoxyribonucleotide-(2,3-dehydro-2,3-deoxyribose 5'-phosphate)-DNA + a 5'-end 5'-phospho-2'-deoxyribonucleoside-DNA + H(+). Its function is as follows. Involved in base excision repair of DNA damaged by oxidation or by mutagenic agents. Acts as a DNA glycosylase that recognizes and removes damaged bases. Has a preference for oxidized purines, such as 7,8-dihydro-8-oxoguanine (8-oxoG). Has AP (apurinic/apyrimidinic) lyase activity and introduces nicks in the DNA strand. Cleaves the DNA backbone by beta-delta elimination to generate a single-strand break at the site of the removed base with both 3'- and 5'-phosphates. The protein is Formamidopyrimidine-DNA glycosylase of Methylorubrum populi (strain ATCC BAA-705 / NCIMB 13946 / BJ001) (Methylobacterium populi).